The primary structure comprises 95 residues: DNA-directed RNA polymerase subunit Rpo11 (95 aa).

This sequence belongs to the archaeal Rpo11/eukaryotic RPB11/RPC19 RNA polymerase subunit family. As to quaternary structure, part of the RNA polymerase complex.

The protein resides in the cytoplasm. The catalysed reaction is RNA(n) + a ribonucleoside 5'-triphosphate = RNA(n+1) + diphosphate. In terms of biological role, DNA-dependent RNA polymerase (RNAP) catalyzes the transcription of DNA into RNA using the four ribonucleoside triphosphates as substrates. This Methanococcus vannielii (strain ATCC 35089 / DSM 1224 / JCM 13029 / OCM 148 / SB) protein is DNA-directed RNA polymerase subunit Rpo11.